The following is a 247-amino-acid chain: Ribonuclease 3 (247 aa).

In terms of domain architecture, RNase III spans 21 to 149 (VDHQPLLDHL…LFGAIFRQHG (129 aa)). Glu62 provides a ligand contact to Mg(2+). Asp66 is a catalytic residue. 2 residues coordinate Mg(2+): Asp135 and Glu138. Residue Glu138 is part of the active site. Residues 176–244 (DWKTTLQEEL…AHQAFRKLRE (69 aa)) form the DRBM domain.

It belongs to the ribonuclease III family. In terms of assembly, homodimer. It depends on Mg(2+) as a cofactor.

It localises to the cytoplasm. The enzyme catalyses Endonucleolytic cleavage to 5'-phosphomonoester.. Its function is as follows. Digests double-stranded RNA. Involved in the processing of primary rRNA transcript to yield the immediate precursors to the large and small rRNAs (23S and 16S). Processes some mRNAs, and tRNAs when they are encoded in the rRNA operon. Processes pre-crRNA and tracrRNA of type II CRISPR loci if present in the organism. The chain is Ribonuclease 3 from Corynebacterium glutamicum (strain ATCC 13032 / DSM 20300 / JCM 1318 / BCRC 11384 / CCUG 27702 / LMG 3730 / NBRC 12168 / NCIMB 10025 / NRRL B-2784 / 534).